Reading from the N-terminus, the 344-residue chain is Secreted LysM effector LysM2 (344 aa).

An N-terminal signal peptide occupies residues 1 to 24 (MMAPKSLQTGLLILLLAKLKLAWG). The region spanning 36–80 (YEAAASSGDTCTSFAAEWGLTEETFASLNPSAACPSLVAGQNYCM) is the LysM 1 domain. A compositionally biased stretch (low complexity) spans 88-134 (STTSSSSSTTSSSTTSSSTTSSSTTSSSTTTSSFTTTTASETTSTAA). Residues 88-141 (STTSSSSSTTSSSTTSSSTTSSSTTSSSTTTSSFTTTTASETTSTAANGVTTPM) form a disordered region. LysM domains are found at residues 153-199 (KFDL…YVCV), 216-262 (KFDL…YVCV), and 296-342 (KFWL…YICV).

This sequence belongs to the secreted LysM effector family.

In terms of biological role, might have a role in sequestration of chitin oligosaccharides (breakdown products of fungal cell walls that are released during invasion and act as triggers of host immunity) to dampen host defense. In Penicillium expansum (Blue mold rot fungus), this protein is Secreted LysM effector LysM2.